A 353-amino-acid chain; its full sequence is Photosystem II protein D1 (353 aa).

An N-acetylthreonine modification is found at threonine 2. Threonine 2 is modified (phosphothreonine). Helical transmembrane passes span 29–46, 118–133, and 142–156; these read YIGWFGVLMIPTLLTATS, HFLLGVACYMGREWEL, and WIAVAYSAPVAAATA. Residue histidine 118 coordinates chlorophyll a. Residue tyrosine 126 participates in pheophytin a binding. The [CaMn4O5] cluster site is built by aspartate 170 and glutamate 189. A helical membrane pass occupies residues 197–218; that stretch reads FHMLGVAGVFGGSLFSAMHGSL. Histidine 198 lines the chlorophyll a pocket. A quinone-binding positions include histidine 215 and 264–265; that span reads SF. Histidine 215 is a Fe cation binding site. Histidine 272 lines the Fe cation pocket. The helical transmembrane segment at 274-288 threads the bilayer; the sequence is FLAAWPVAGIWFTAL. [CaMn4O5] cluster is bound by residues histidine 332, glutamate 333, aspartate 342, and alanine 344. The propeptide occupies 345 to 353; the sequence is AVESISIGG.

It belongs to the reaction center PufL/M/PsbA/D family. PSII is composed of 1 copy each of membrane proteins PsbA, PsbB, PsbC, PsbD, PsbE, PsbF, PsbH, PsbI, PsbJ, PsbK, PsbL, PsbM, PsbT, PsbX, PsbY, PsbZ, Psb30/Ycf12, at least 3 peripheral proteins of the oxygen-evolving complex and a large number of cofactors. It forms dimeric complexes. Requires The D1/D2 heterodimer binds P680, chlorophylls that are the primary electron donor of PSII, and subsequent electron acceptors. It shares a non-heme iron and each subunit binds pheophytin, quinone, additional chlorophylls, carotenoids and lipids. D1 provides most of the ligands for the Mn4-Ca-O5 cluster of the oxygen-evolving complex (OEC). There is also a Cl(-1) ion associated with D1 and D2, which is required for oxygen evolution. The PSII complex binds additional chlorophylls, carotenoids and specific lipids. as cofactor. Post-translationally, tyr-161 forms a radical intermediate that is referred to as redox-active TyrZ, YZ or Y-Z. In terms of processing, C-terminally processed by CTPA; processing is essential to allow assembly of the oxygen-evolving complex and thus photosynthetic growth.

Its subcellular location is the plastid. The protein localises to the chloroplast thylakoid membrane. The enzyme catalyses 2 a plastoquinone + 4 hnu + 2 H2O = 2 a plastoquinol + O2. Functionally, photosystem II (PSII) is a light-driven water:plastoquinone oxidoreductase that uses light energy to abstract electrons from H(2)O, generating O(2) and a proton gradient subsequently used for ATP formation. It consists of a core antenna complex that captures photons, and an electron transfer chain that converts photonic excitation into a charge separation. The D1/D2 (PsbA/PsbD) reaction center heterodimer binds P680, the primary electron donor of PSII as well as several subsequent electron acceptors. In Pinus contorta (Shore pine), this protein is Photosystem II protein D1.